A 970-amino-acid polypeptide reads, in one-letter code: Bifunctional glutamine synthetase adenylyltransferase/adenylyl-removing enzyme (970 aa).

Residues 1–454 are adenylyl removase; the sequence is MNSLPPRPSL…HFQQVFAAPQ (454 aa). The tract at residues 468–970 is adenylyl transferase; sequence QAVLASIWAG…WRRVMEEGKA (503 aa).

The protein belongs to the GlnE family. Mg(2+) serves as cofactor.

It catalyses the reaction [glutamine synthetase]-O(4)-(5'-adenylyl)-L-tyrosine + phosphate = [glutamine synthetase]-L-tyrosine + ADP. It carries out the reaction [glutamine synthetase]-L-tyrosine + ATP = [glutamine synthetase]-O(4)-(5'-adenylyl)-L-tyrosine + diphosphate. Its function is as follows. Involved in the regulation of glutamine synthetase GlnA, a key enzyme in the process to assimilate ammonia. When cellular nitrogen levels are high, the C-terminal adenylyl transferase (AT) inactivates GlnA by covalent transfer of an adenylyl group from ATP to specific tyrosine residue of GlnA, thus reducing its activity. Conversely, when nitrogen levels are low, the N-terminal adenylyl removase (AR) activates GlnA by removing the adenylyl group by phosphorolysis, increasing its activity. The regulatory region of GlnE binds the signal transduction protein PII (GlnB) which indicates the nitrogen status of the cell. This is Bifunctional glutamine synthetase adenylyltransferase/adenylyl-removing enzyme from Thioalkalivibrio sulfidiphilus (strain HL-EbGR7).